The sequence spans 384 residues: Glycerol 3-phosphate oxidase (384 aa).

An N-terminal signal peptide occupies residues 1–15 (METRDVLIVGGGVIG). An FAD-binding site is contributed by Ile-14. The N-palmitoyl cysteine moiety is linked to residue Cys-16. Cys-16 carries the S-diacylglycerol cysteine lipid modification. FAD is bound by residues Glu-33, 42–43 (TS), and 47–49 (SGV). Sn-glycerol 3-phosphate-binding residues include Ser-47 and His-51. His-51 (proton acceptor) is an active-site residue. Val-177 lines the FAD pocket. Residues Lys-258 and Arg-320 each contribute to the sn-glycerol 3-phosphate site. 346–347 (MK) lines the FAD pocket. Residue Ser-348 coordinates sn-glycerol 3-phosphate. Residue Thr-352 coordinates FAD.

In terms of assembly, monomer. FAD is required as a cofactor.

The protein resides in the cytoplasm. Its subcellular location is the cell membrane. It catalyses the reaction sn-glycerol 3-phosphate + O2 = dihydroxyacetone phosphate + H2O2. Its pathway is polyol metabolism; glycerol degradation via glycerol kinase pathway; glycerone phosphate from sn-glycerol 3-phosphate (aerobic route): step 1/1. In terms of biological role, catalyzes the oxidation of glycerol 3-phosphate to dihydroxyacetone phosphate (DHAP), with a reduction of O2 to H2O2. The formation of hydrogen peroxide by this enzyme is crucial for cytotoxic effects of M.pneumoniae on host cells. Is involved in the metabolism of glycerol and is essential for glycerol utilization; glycerol is one of the few carbon sources that can be utilized by M.pneumoniae for growth. To a lesser extent, is also able to use glyceraldehyde 3-phosphate (GAP), an intermediate in the glycolysis pathway, as a substrate (but the structure of the product has not been elucidated). Therefore, in the absence of glycerol, GAP may serve as a substrate in the GlpO reaction to supply H2O2 during mycoplasma infection. Does not show any dehydrogenase activity with NAD(+). In Mycoplasma pneumoniae (strain ATCC 29342 / M129 / Subtype 1) (Mycoplasmoides pneumoniae), this protein is Glycerol 3-phosphate oxidase.